Here is a 338-residue protein sequence, read N- to C-terminus: D-erythrose-4-phosphate dehydrogenase (338 aa).

11-12 (RI) contacts NAD(+). Substrate-binding positions include 153 to 155 (SCT), Arg-199, 212 to 213 (TK), and Arg-235. Cys-154 acts as the Nucleophile in catalysis. Residue Asn-317 coordinates NAD(+).

Belongs to the glyceraldehyde-3-phosphate dehydrogenase family. Epd subfamily. Homotetramer.

The protein resides in the cytoplasm. It catalyses the reaction D-erythrose 4-phosphate + NAD(+) + H2O = 4-phospho-D-erythronate + NADH + 2 H(+). The protein operates within cofactor biosynthesis; pyridoxine 5'-phosphate biosynthesis; pyridoxine 5'-phosphate from D-erythrose 4-phosphate: step 1/5. Its function is as follows. Catalyzes the NAD-dependent conversion of D-erythrose 4-phosphate to 4-phosphoerythronate. The polypeptide is D-erythrose-4-phosphate dehydrogenase (Shewanella oneidensis (strain ATCC 700550 / JCM 31522 / CIP 106686 / LMG 19005 / NCIMB 14063 / MR-1)).